The sequence spans 153 residues: 3-hydroxyacyl-[acyl-carrier-protein] dehydratase FabZ (153 aa).

The active site involves histidine 58.

Belongs to the thioester dehydratase family. FabZ subfamily.

It is found in the cytoplasm. The enzyme catalyses a (3R)-hydroxyacyl-[ACP] = a (2E)-enoyl-[ACP] + H2O. Involved in unsaturated fatty acids biosynthesis. Catalyzes the dehydration of short chain beta-hydroxyacyl-ACPs and long chain saturated and unsaturated beta-hydroxyacyl-ACPs. The polypeptide is 3-hydroxyacyl-[acyl-carrier-protein] dehydratase FabZ (Bradyrhizobium diazoefficiens (strain JCM 10833 / BCRC 13528 / IAM 13628 / NBRC 14792 / USDA 110)).